Reading from the N-terminus, the 611-residue chain is Elongation factor 4 1 (611 aa).

Residues 11-193 enclose the tr-type G domain; it reads QHIRNFSIVA…QIVHKIPAPQ (183 aa). GTP-binding positions include 23 to 28 and 140 to 143; these read DHGKST and NKID.

It belongs to the TRAFAC class translation factor GTPase superfamily. Classic translation factor GTPase family. LepA subfamily.

The protein resides in the cell membrane. It catalyses the reaction GTP + H2O = GDP + phosphate + H(+). Its function is as follows. Required for accurate and efficient protein synthesis under certain stress conditions. May act as a fidelity factor of the translation reaction, by catalyzing a one-codon backward translocation of tRNAs on improperly translocated ribosomes. Back-translocation proceeds from a post-translocation (POST) complex to a pre-translocation (PRE) complex, thus giving elongation factor G a second chance to translocate the tRNAs correctly. Binds to ribosomes in a GTP-dependent manner. The polypeptide is Elongation factor 4 1 (Lactiplantibacillus plantarum (strain ATCC BAA-793 / NCIMB 8826 / WCFS1) (Lactobacillus plantarum)).